The sequence spans 407 residues: Imidazolonepropionase (407 aa).

Fe(3+) contacts are provided by His-75 and His-77. Residues His-75 and His-77 each contribute to the Zn(2+) site. 3 residues coordinate 4-imidazolone-5-propanoate: Arg-84, Tyr-142, and His-169. Tyr-142 provides a ligand contact to N-formimidoyl-L-glutamate. His-232 provides a ligand contact to Fe(3+). Position 232 (His-232) interacts with Zn(2+). Gln-235 contacts 4-imidazolone-5-propanoate. Asp-306 is a Fe(3+) binding site. A Zn(2+)-binding site is contributed by Asp-306. 2 residues coordinate N-formimidoyl-L-glutamate: Asn-308 and Gly-310. Thr-311 contributes to the 4-imidazolone-5-propanoate binding site.

This sequence belongs to the metallo-dependent hydrolases superfamily. HutI family. Requires Zn(2+) as cofactor. It depends on Fe(3+) as a cofactor.

The protein localises to the cytoplasm. The enzyme catalyses 4-imidazolone-5-propanoate + H2O = N-formimidoyl-L-glutamate. Its pathway is amino-acid degradation; L-histidine degradation into L-glutamate; N-formimidoyl-L-glutamate from L-histidine: step 3/3. In terms of biological role, catalyzes the hydrolytic cleavage of the carbon-nitrogen bond in imidazolone-5-propanoate to yield N-formimidoyl-L-glutamate. It is the third step in the universal histidine degradation pathway. This Rhodococcus jostii (strain RHA1) protein is Imidazolonepropionase.